A 69-amino-acid polypeptide reads, in one-letter code: Purkinje cell protein 4-like protein 1 (69 aa).

Over residues 1 to 15 (MSELNTKTSPATNQA) the composition is skewed to polar residues. The segment at 1–47 (MSELNTKTSPATNQAPGPEEKGKAGSAKKTEDEEEEIDIDLTAPETE) is disordered. Residue Thr8 is modified to Phosphothreonine. Positions 18 to 31 (PEEKGKAGSAKKTE) are enriched in basic and acidic residues. An IQ domain is found at 46–69 (TEKAALAIQGKFRRFQKRKKDPSS).

Belongs to the PCP4 family.

The chain is Purkinje cell protein 4-like protein 1 (PCP4L1) from Bos taurus (Bovine).